A 92-amino-acid polypeptide reads, in one-letter code: Putative pterin-4-alpha-carbinolamine dehydratase (92 aa).

The protein belongs to the pterin-4-alpha-carbinolamine dehydratase family.

It carries out the reaction (4aS,6R)-4a-hydroxy-L-erythro-5,6,7,8-tetrahydrobiopterin = (6R)-L-erythro-6,7-dihydrobiopterin + H2O. In Haloarcula marismortui (strain ATCC 43049 / DSM 3752 / JCM 8966 / VKM B-1809) (Halobacterium marismortui), this protein is Putative pterin-4-alpha-carbinolamine dehydratase.